We begin with the raw amino-acid sequence, 229 residues long: uncharacterized protein (229 aa).

This is an uncharacterized protein from Treponema pallidum (strain Nichols).